We begin with the raw amino-acid sequence, 219 residues long: Ribose-5-phosphate isomerase A (219 aa).

Residues Thr28–Thr31, Asp81–Asp84, and Lys94–Gly97 contribute to the substrate site. Catalysis depends on Glu103, which acts as the Proton acceptor. Lys121 provides a ligand contact to substrate.

This sequence belongs to the ribose 5-phosphate isomerase family. In terms of assembly, homodimer.

The catalysed reaction is aldehydo-D-ribose 5-phosphate = D-ribulose 5-phosphate. It functions in the pathway carbohydrate degradation; pentose phosphate pathway; D-ribose 5-phosphate from D-ribulose 5-phosphate (non-oxidative stage): step 1/1. Its function is as follows. Catalyzes the reversible conversion of ribose-5-phosphate to ribulose 5-phosphate. The polypeptide is Ribose-5-phosphate isomerase A (Shewanella frigidimarina (strain NCIMB 400)).